The primary structure comprises 218 residues: MALVPYDENVLPALSKLHQSSAEFTLANHRIRLSQDWKRLGVAAVVWDAAVVLCMFLEMGKVDLKGKRVIELGAGTGLVGIVAALLGANVTITDREPALEFLTANVHENIPQGRQKAVQVSELTWGENLDLYPQGGYDLILGADIVYLEETFPALLQTLEHLSSGDTVVLLSCRIRYERDERFLTELRQRFSVQEVHYDSQRDIHVYRAVKNKSNTEL.

Residues Trp47, 73–75, Asp94, Trp125, and Ala143 each bind S-adenosyl-L-methionine; that span reads GAG.

The protein belongs to the methyltransferase superfamily. METTL21 family.

It is found in the cytoplasm. The enzyme catalyses L-lysyl-[protein] + 3 S-adenosyl-L-methionine = N(6),N(6),N(6)-trimethyl-L-lysyl-[protein] + 3 S-adenosyl-L-homocysteine + 3 H(+). Its function is as follows. Protein-lysine methyltransferase that selectively trimethylates residues in heat shock protein 70 (HSP70) family members. In Danio rerio (Zebrafish), this protein is Protein N-lysine methyltransferase METTL21A (mettl21a).